We begin with the raw amino-acid sequence, 2988 residues long: NBPF family member NBPF14 (2988 aa).

The stretch at arginine 75 to alanine 119 forms a coiled coil. Disordered regions lie at residues lysine 161–proline 200, glutamate 451–serine 474, and tryptophan 520–serine 566. Over residues glutamate 165–glutamate 177 the composition is skewed to acidic residues. Olduvai domains follow at residues glutamate 165–proline 259, glutamate 436–proline 528, glutamate 529–glycine 600, arginine 601–proline 692, serine 695–aspartate 750, arginine 751–lysine 843, glutamate 844–aspartate 919, arginine 920–lysine 1012, glutamate 1013–proline 1105, serine 1108–aspartate 1163, arginine 1164–lysine 1256, glutamate 1257–proline 1349, serine 1352–aspartate 1407, arginine 1408–lysine 1500, glutamate 1501–proline 1593, serine 1596–aspartate 1651, arginine 1652–lysine 1744, glutamate 1745–proline 1837, serine 1840–aspartate 1895, arginine 1896–lysine 1988, glutamate 1989–proline 2081, serine 2084–aspartate 2139, arginine 2140–lysine 2232, glutamate 2233–proline 2325, serine 2328–aspartate 2383, arginine 2384–lysine 2476, glutamate 2477–proline 2569, serine 2572–aspartate 2627, arginine 2628–lysine 2720, glutamate 2721–proline 2813, serine 2816–lysine 2889, and glutamate 2890–glutamine 2988. The span at glutamate 190 to proline 200 shows a compositional bias: basic and acidic residues. 2 stretches are compositionally biased toward acidic residues: residues asparagine 530–glutamate 539 and glutamate 550–aspartate 562. Disordered regions lie at residues lysine 754–leucine 773, glutamate 828–lysine 871, and lysine 999–aspartate 1038. 2 stretches are compositionally biased toward basic residues: residues glycine 831–arginine 849 and glycine 1000–arginine 1018. The segment at lysine 1243–aspartate 1282 is disordered. The segment covering glycine 1244–arginine 1262 has biased composition (basic residues). A disordered region spans residues lysine 1487 to serine 1521. Residues glycine 1488–arginine 1506 are compositionally biased toward basic residues. The segment at lysine 1731 to aspartate 1770 is disordered. Positions glycine 1732–arginine 1750 are enriched in basic residues. Positions lysine 1975 to aspartate 2014 are disordered. The span at glycine 1976 to arginine 1994 shows a compositional bias: basic residues. The disordered stretch occupies residues lysine 2219–aspartate 2258. Over residues glycine 2220–arginine 2238 the composition is skewed to basic residues. The interval lysine 2463–aspartate 2502 is disordered. A compositionally biased stretch (basic residues) spans glycine 2464–arginine 2482. 2 disordered regions span residues lysine 2707 to leucine 2745 and glycine 2877 to leucine 2909. 2 stretches are compositionally biased toward basic residues: residues glycine 2708–arginine 2726 and glycine 2877–arginine 2895.

It belongs to the NBPF family. In terms of tissue distribution, expressed in spleen and fetal liver.

It is found in the cytoplasm. This chain is NBPF family member NBPF14, found in Homo sapiens (Human).